A 255-amino-acid polypeptide reads, in one-letter code: Poxin (255 aa).

This sequence belongs to the poxin family. Highly divergent.

The enzyme catalyses 2',3'-cGAMP + H2O = Gp(2'-5')Ap(3') + H(+). In terms of biological role, nuclease that cleaves 2',3'-cGAMP. In Bombyx mori (Silk moth), this protein is Poxin.